The primary structure comprises 116 residues: MARAQLVLVALVAALLLAAPHAAVAITCGQVNSAVGPCLTYARGGAGPSAACCSGVRSLKAAASTTADRRTACNCLKNAARGIKGLNAGNAASIPSKCGVSVPYTISASIDCSRVS.

A signal peptide spans 1–25 (MARAQLVLVALVAALLLAAPHAAVA). 4 disulfide bridges follow: cysteine 28–cysteine 75, cysteine 38–cysteine 52, cysteine 53–cysteine 98, and cysteine 73–cysteine 112.

This sequence belongs to the plant LTP family. In terms of tissue distribution, aleurone (external part) of the seeds.

Its function is as follows. Plant non-specific lipid-transfer proteins transfer phospholipids as well as galactolipids across membranes. May play a role in wax or cutin deposition in the cell walls of expanding epidermal cells and certain secretory tissues. The protein is Non-specific lipid-transfer protein 1 (LTP) of Oryza sativa subsp. indica (Rice).